Here is a 212-residue protein sequence, read N- to C-terminus: Pyridoxine/pyridoxamine 5'-phosphate oxidase (212 aa).

Residues 8-11 (RREY) and Lys66 each bind substrate. FMN-binding positions include 61–66 (RIVLLK), 76–77 (FT), Arg82, Lys83, and Gln105. Tyr123, Arg127, and Ser131 together coordinate substrate. Residues 140-141 (QS) and Trp185 each bind FMN. Substrate is bound at residue 191 to 193 (RLH). Arg195 contributes to the FMN binding site.

This sequence belongs to the pyridoxamine 5'-phosphate oxidase family. In terms of assembly, homodimer. FMN is required as a cofactor.

The catalysed reaction is pyridoxamine 5'-phosphate + O2 + H2O = pyridoxal 5'-phosphate + H2O2 + NH4(+). It carries out the reaction pyridoxine 5'-phosphate + O2 = pyridoxal 5'-phosphate + H2O2. It participates in cofactor metabolism; pyridoxal 5'-phosphate salvage; pyridoxal 5'-phosphate from pyridoxamine 5'-phosphate: step 1/1. It functions in the pathway cofactor metabolism; pyridoxal 5'-phosphate salvage; pyridoxal 5'-phosphate from pyridoxine 5'-phosphate: step 1/1. In terms of biological role, catalyzes the oxidation of either pyridoxine 5'-phosphate (PNP) or pyridoxamine 5'-phosphate (PMP) into pyridoxal 5'-phosphate (PLP). In Shewanella baltica (strain OS155 / ATCC BAA-1091), this protein is Pyridoxine/pyridoxamine 5'-phosphate oxidase.